We begin with the raw amino-acid sequence, 556 residues long: RING finger protein 207 (556 aa).

Residues 25–64 (CPLCHAQYERPCLLDCFHEFCAGCLRGRAADGRLACPLCQ) form an RING-type zinc finger. The segment at 93–145 (TEVVRCANCDLECGKQDAETTYFCNTCGQPLCARCRDETHRARMFARHDIVAL) adopts a B box-type; atypical zinc-finger fold. Residues Cys98, Cys101, Cys127, and His132 each coordinate Zn(2+). Coiled coils occupy residues 218-273 (TREA…NKAE) and 385-425 (FTEH…SLIK). A disordered region spans residues 517 to 556 (FQVPVDEPSDHPQNTHDDGVNAEAPARVSTLKPAMEKEVS). The span at 524 to 535 (PSDHPQNTHDDG) shows a compositional bias: basic and acidic residues.

In terms of assembly, interacts with the core-glycosylated, but not the fully glycosylated form of KCNH2/HERG. Interacts with DNAJA1 and HSPA8. Interacts (via the C-terminus) with HSPA1A; this interaction additively increases KCNH2 expression.

Its subcellular location is the cytoplasm. Functionally, plays a role in cardiac repolarization possibly by stabilizing membrane expression of the potassium channel KCNH2/HERG, or by assisting its synthesis, folding or export from the endoplasmic reticulum, in a heat shock protein-dependent manner. The chain is RING finger protein 207 (RNF207) from Bos taurus (Bovine).